The sequence spans 248 residues: Ubiquinone/menaquinone biosynthesis C-methyltransferase UbiE (248 aa).

S-adenosyl-L-methionine contacts are provided by Ser-68 and Asp-92.

The protein belongs to the class I-like SAM-binding methyltransferase superfamily. MenG/UbiE family.

It carries out the reaction a 2-demethylmenaquinol + S-adenosyl-L-methionine = a menaquinol + S-adenosyl-L-homocysteine + H(+). The catalysed reaction is a 2-methoxy-6-(all-trans-polyprenyl)benzene-1,4-diol + S-adenosyl-L-methionine = a 5-methoxy-2-methyl-3-(all-trans-polyprenyl)benzene-1,4-diol + S-adenosyl-L-homocysteine + H(+). It participates in quinol/quinone metabolism; menaquinone biosynthesis; menaquinol from 1,4-dihydroxy-2-naphthoate: step 2/2. The protein operates within cofactor biosynthesis; ubiquinone biosynthesis. Methyltransferase required for the conversion of demethylmenaquinol (DMKH2) to menaquinol (MKH2) and the conversion of 2-polyprenyl-6-methoxy-1,4-benzoquinol (DDMQH2) to 2-polyprenyl-3-methyl-6-methoxy-1,4-benzoquinol (DMQH2). In Rickettsia felis (strain ATCC VR-1525 / URRWXCal2) (Rickettsia azadi), this protein is Ubiquinone/menaquinone biosynthesis C-methyltransferase UbiE.